A 129-amino-acid chain; its full sequence is UPF0102 protein Mnod_0024 (129 aa).

Belongs to the UPF0102 family.

This chain is UPF0102 protein Mnod_0024, found in Methylobacterium nodulans (strain LMG 21967 / CNCM I-2342 / ORS 2060).